Here is a 360-residue protein sequence, read N- to C-terminus: Protein-glutamate methylesterase/protein-glutamine glutaminase 3 (360 aa).

Positions 14 to 131 (RVLVIDDSAT…AEGVQAYAEE (118 aa)) constitute a Response regulatory domain. 4-aspartylphosphate is present on Asp65. The region spanning 169-360 (AGKDGRVVAV…AGKLMELDGA (192 aa)) is the CheB-type methylesterase domain. Catalysis depends on residues Ser181, His207, and Asp303.

The protein belongs to the CheB family. Phosphorylated by CheA. Phosphorylation of the N-terminal regulatory domain activates the methylesterase activity.

The protein localises to the cytoplasm. It carries out the reaction [protein]-L-glutamate 5-O-methyl ester + H2O = L-glutamyl-[protein] + methanol + H(+). The enzyme catalyses L-glutaminyl-[protein] + H2O = L-glutamyl-[protein] + NH4(+). Functionally, involved in chemotaxis. Part of a chemotaxis signal transduction system that modulates chemotaxis in response to various stimuli. Catalyzes the demethylation of specific methylglutamate residues introduced into the chemoreceptors (methyl-accepting chemotaxis proteins or MCP) by CheR. Also mediates the irreversible deamidation of specific glutamine residues to glutamic acid. This Burkholderia thailandensis (strain ATCC 700388 / DSM 13276 / CCUG 48851 / CIP 106301 / E264) protein is Protein-glutamate methylesterase/protein-glutamine glutaminase 3.